The following is a 365-amino-acid chain: Ferredoxin--NADP reductase, chloroplastic (365 aa).

Residues 1–22 (MAAAVTAAVSFPSTKSTPLSTR) are disordered. Positions 11-22 (FPSTKSTPLSTR) are enriched in polar residues. Positions 86 to 208 (KNPYTGRCLL…TGPVGKEMLM (123 aa)) constitute an FAD-binding FR-type domain. FAD contacts are provided by residues 144–147 (RLYS), 165–167 (CVK), Tyr-171, 182–184 (VCS), and Thr-223. NADP(+)-binding residues include Ser-147 and Lys-167. Residues Thr-223, 255 to 256 (VP), 285 to 286 (SR), Lys-295, 324 to 325 (GL), and Glu-363 each bind NADP(+).

Belongs to the ferredoxin--NADP reductase type 1 family. Requires FAD as cofactor.

It localises to the plastid. The protein localises to the chloroplast stroma. Its subcellular location is the chloroplast thylakoid membrane. It carries out the reaction 2 reduced [2Fe-2S]-[ferredoxin] + NADP(+) + H(+) = 2 oxidized [2Fe-2S]-[ferredoxin] + NADPH. It functions in the pathway energy metabolism; photosynthesis. In terms of biological role, may play a key role in regulating the relative amounts of cyclic and non-cyclic electron flow to meet the demands of the plant for ATP and reducing power. The protein is Ferredoxin--NADP reductase, chloroplastic (PETH) of Mesembryanthemum crystallinum (Common ice plant).